The sequence spans 400 residues: Pectinesterase B (400 aa).

Substrate-binding residues include Thr-171 and Gln-205. Asp-228 acts as the Proton donor in catalysis. Residue Asp-261 is the Nucleophile of the active site. Substrate-binding residues include Arg-325 and Trp-327.

It belongs to the pectinesterase family.

The enzyme catalyses [(1-&gt;4)-alpha-D-galacturonosyl methyl ester](n) + n H2O = [(1-&gt;4)-alpha-D-galacturonosyl](n) + n methanol + n H(+). Its pathway is glycan metabolism; pectin degradation; 2-dehydro-3-deoxy-D-gluconate from pectin: step 1/5. This chain is Pectinesterase B (pemB), found in Pectobacterium parmentieri.